Here is a 96-residue protein sequence, read N- to C-terminus: Large ribosomal subunit protein bL28 (96 aa).

This sequence belongs to the bacterial ribosomal protein bL28 family.

The polypeptide is Large ribosomal subunit protein bL28 (Leptospira biflexa serovar Patoc (strain Patoc 1 / Ames)).